The sequence spans 517 residues: 2-isopropylmalate synthase (517 aa).

Positions 5-267 constitute a Pyruvate carboxyltransferase domain; that stretch reads VIIFDTTLRD…HTNVRCQEIY (263 aa). Mn(2+)-binding residues include D14, H202, H204, and N238. Residues 392–517 form a regulatory domain region; that stretch reads RLKCFHVDSS…QRKYIKKNNN (126 aa).

Belongs to the alpha-IPM synthase/homocitrate synthase family. LeuA type 1 subfamily. Homodimer. Mn(2+) is required as a cofactor.

Its subcellular location is the cytoplasm. The enzyme catalyses 3-methyl-2-oxobutanoate + acetyl-CoA + H2O = (2S)-2-isopropylmalate + CoA + H(+). It functions in the pathway amino-acid biosynthesis; L-leucine biosynthesis; L-leucine from 3-methyl-2-oxobutanoate: step 1/4. In terms of biological role, catalyzes the condensation of the acetyl group of acetyl-CoA with 3-methyl-2-oxobutanoate (2-ketoisovalerate) to form 3-carboxy-3-hydroxy-4-methylpentanoate (2-isopropylmalate). The sequence is that of 2-isopropylmalate synthase from Blochmanniella pennsylvanica (strain BPEN).